We begin with the raw amino-acid sequence, 144 residues long: Large ribosomal subunit protein uL16 (144 aa).

It belongs to the universal ribosomal protein uL16 family. Part of the 50S ribosomal subunit.

Binds 23S rRNA and is also seen to make contacts with the A and possibly P site tRNAs. The protein is Large ribosomal subunit protein uL16 of Pediococcus pentosaceus (strain ATCC 25745 / CCUG 21536 / LMG 10740 / 183-1w).